Here is a 751-residue protein sequence, read N- to C-terminus: Proton-associated sugar transporter A (751 aa).

6 consecutive transmembrane segments (helical) span residues 93 to 113, 123 to 143, 155 to 175, 191 to 211, 233 to 253, and 268 to 288; these read ILFG…PVLL, SLVW…LGAW, RPFI…LLNG, WGIL…DSAD, IHAL…GIHW, and VIYV…LISI. Phosphothreonine is present on threonine 500. 6 helical membrane passes run 536–556, 576–596, 606–626, 630–650, 688–708, and 710–730; these read GWLS…EVVF, VTMG…YSAI, VRTL…LATL, LYVV…LCTL, FLAQ…VGSA, and GVMY…SLCV.

It belongs to the glycoside-pentoside-hexuronide (GPH) cation symporter transporter (TC 2.A.2) family.

The protein localises to the membrane. It carries out the reaction D-galactose(in) + H(+)(in) = D-galactose(out) + H(+)(out). It catalyses the reaction D-glucose(out) + H(+)(out) = D-glucose(in) + H(+)(in). Functionally, proton-associated glucose transporter in the brain. This chain is Proton-associated sugar transporter A, found in Mus musculus (Mouse).